The following is a 149-amino-acid chain: Deoxyuridine 5'-triphosphate nucleotidohydrolase (149 aa).

Residues Arg65 to Gly67, Asn78, Thr82 to Asp84, and Lys92 contribute to the substrate site.

Belongs to the dUTPase family. Requires Mg(2+) as cofactor.

It carries out the reaction dUTP + H2O = dUMP + diphosphate + H(+). Its pathway is pyrimidine metabolism; dUMP biosynthesis; dUMP from dCTP (dUTP route): step 2/2. Its function is as follows. This enzyme is involved in nucleotide metabolism: it produces dUMP, the immediate precursor of thymidine nucleotides and it decreases the intracellular concentration of dUTP so that uracil cannot be incorporated into DNA. The polypeptide is Deoxyuridine 5'-triphosphate nucleotidohydrolase (Chlorobium chlorochromatii (strain CaD3)).